The chain runs to 675 residues: Protein kintoun (675 aa).

Disordered stretches follow at residues 98-131, 265-293, 310-340, and 509-659; these read ASKKQQQEQEKQEKEQQQQAAGAGKPEGPGKQGA, AGEGAGGRVRPRPDVPGVPDLPGAKTAPP, EGGAGSSSRSTFSFDKSRKAGGTEAAGAVAK, and EAAH…AAPT. The span at 102 to 113 shows a compositional bias: basic and acidic residues; sequence QQQEQEKQEKEQ. Over residues 279–293 the composition is skewed to low complexity; sequence VPGVPDLPGAKTAPP. Low complexity predominate over residues 529-543; that stretch reads AAAASSGAAPAPAAA. Residues 544-553 are compositionally biased toward acidic residues; the sequence is SEEEEEEDKE. Positions 564-577 are enriched in low complexity; that stretch reads DPAAAAAAAGASSG. Residues 579–596 show a composition bias toward basic and acidic residues; the sequence is ELTENERKWRELHARQQQ. 2 stretches are compositionally biased toward low complexity: residues 604–617 and 628–659; these read AAEAAAAAAAAAAE and VAQGGAAAAAESVAAAKQQVQQQPVAAAAAPT.

Belongs to the PIH1 family. Kintoun subfamily.

The protein resides in the cytoplasm. Its function is as follows. Required for cytoplasmic pre-assembly of axonemal dyneins, thereby playing a central role in motility in cilia and flagella. Involved in pre-assembly of dynein arm complexes in the cytoplasm before intraflagellar transport loads them for the ciliary compartment. The sequence is that of Protein kintoun (pf13) from Chlamydomonas reinhardtii (Chlamydomonas smithii).